We begin with the raw amino-acid sequence, 427 residues long: 3-phosphoshikimate 1-carboxyvinyltransferase (427 aa).

3-phosphoshikimate is bound by residues K22, S23, and R27. K22 serves as a coordination point for phosphoenolpyruvate. Residues G96 and R124 each contribute to the phosphoenolpyruvate site. 3-phosphoshikimate is bound by residues S169, S170, Q171, S197, D313, N336, and K340. Residue Q171 coordinates phosphoenolpyruvate. Residue D313 is the Proton acceptor of the active site. R344, R386, and K411 together coordinate phosphoenolpyruvate.

Belongs to the EPSP synthase family. Monomer.

The protein resides in the cytoplasm. It catalyses the reaction 3-phosphoshikimate + phosphoenolpyruvate = 5-O-(1-carboxyvinyl)-3-phosphoshikimate + phosphate. Its pathway is metabolic intermediate biosynthesis; chorismate biosynthesis; chorismate from D-erythrose 4-phosphate and phosphoenolpyruvate: step 6/7. Functionally, catalyzes the transfer of the enolpyruvyl moiety of phosphoenolpyruvate (PEP) to the 5-hydroxyl of shikimate-3-phosphate (S3P) to produce enolpyruvyl shikimate-3-phosphate and inorganic phosphate. This Salmonella agona (strain SL483) protein is 3-phosphoshikimate 1-carboxyvinyltransferase.